The following is a 197-amino-acid chain: Phosphoheptose isomerase (197 aa).

The SIS domain occupies 34-196; the sequence is MVHCLLGGNK…DRTLFPQDEQ (163 aa). Residue 49–51 participates in substrate binding; that stretch reads NGG. Positions 58 and 62 each coordinate Zn(2+). Residues glutamate 62, 91 to 92, 117 to 119, serine 122, and glutamine 172 each bind substrate; these read ND and STS. Residues glutamine 172 and histidine 180 each coordinate Zn(2+).

It belongs to the SIS family. GmhA subfamily. Homotetramer. The cofactor is Zn(2+).

It localises to the cytoplasm. The enzyme catalyses 2 D-sedoheptulose 7-phosphate = D-glycero-alpha-D-manno-heptose 7-phosphate + D-glycero-beta-D-manno-heptose 7-phosphate. It participates in carbohydrate biosynthesis; D-glycero-D-manno-heptose 7-phosphate biosynthesis; D-glycero-alpha-D-manno-heptose 7-phosphate and D-glycero-beta-D-manno-heptose 7-phosphate from sedoheptulose 7-phosphate: step 1/1. Catalyzes the isomerization of sedoheptulose 7-phosphate in D-glycero-D-manno-heptose 7-phosphate. The polypeptide is Phosphoheptose isomerase (Shewanella sp. (strain W3-18-1)).